The following is a 212-amino-acid chain: MAQTDKPTCIPPELPKMLKEFAKAAIRAQPQDLIQWGADYFEALSRGETPPVRERSERVALCNWAELTPELLKILHSQVAGRLIIRAEELAQMWKVVNLPTDLFNSVMNVGRFTEEIEWLKFLALACSALGVTITKTLKIVCEVLSCDHNGGLPRIPFSTFQFLYTYIAEVDGEICASHVSRMLNYIEQEVIGPDGLITVNDFTQNPRVWLE.

In terms of domain architecture, RIIa spans 12 to 49 (PELPKMLKEFAKAAIRAQPQDLIQWGADYFEALSRGET). Ser56 carries the post-translational modification Phosphoserine. The segment at 209–212 (VWLE) is interaction with RHPN1.

Belongs to the ropporin family. As to quaternary structure, homodimer. Interacts with RHPN1. May interact with SPA17. Interacts with AKAP3. Interacts with FSCB; the interaction increases upon spermatozoa capacitation conditions. Post-translationally, sumoylated, sumoylation decreases upon spermatozoa capacitation conditions.

It localises to the cell projection. It is found in the cilium. Its subcellular location is the flagellum. Important for male fertility. With ROPN1L, involved in fibrous sheath integrity and sperm motility, plays a role in PKA-dependent signaling processes required for spermatozoa capacitation. The sequence is that of Ropporin-1B (ROPN1B) from Homo sapiens (Human).